A 461-amino-acid polypeptide reads, in one-letter code: Hydroxyproline dehydrogenase (461 aa).

The residue at position 310 (lysine 310) is an N6-acetyllysine.

The protein belongs to the proline oxidase family. Requires FAD as cofactor.

The enzyme catalyses trans-4-hydroxy-L-proline + a quinone = (3R,5S)-1-pyrroline-3-hydroxy-5-carboxylate + a quinol + H(+). The catalysed reaction is L-proline + a quinone = (S)-1-pyrroline-5-carboxylate + a quinol + H(+). It participates in amino-acid degradation; L-proline degradation into L-glutamate; L-glutamate from L-proline: step 1/2. In terms of biological role, dehydrogenase that converts trans-4-L-hydroxyproline to delta-1-pyrroline-3-hydroxy-5-carboxylate (Hyp) using ubiquinone-10 as the terminal electron acceptor. Can also use proline as a substrate but with a very much lower efficiency. Does not react with other diastereomers of Hyp: trans-4-D-hydroxyproline and cis-4-L-hydroxyproline. Ubiquininone analogs such as menadione, duroquinone and ubiquinone-1 react more efficiently than oxygen as the terminal electron acceptor during catalysis. The chain is Hydroxyproline dehydrogenase from Bos taurus (Bovine).